A 259-amino-acid polypeptide reads, in one-letter code: Cytosolic Fe-S cluster assembly factor Nubp2 homolog (259 aa).

Residue 14–21 (GKGGVGKS) participates in ATP binding. Residues C188 and C191 each coordinate [4Fe-4S] cluster.

The protein belongs to the Mrp/NBP35 ATP-binding proteins family. NUBP2/CFD1 subfamily. In terms of assembly, heterotetramer of 2 Nubp1 and 2 Nubp2 chains. Requires [4Fe-4S] cluster as cofactor.

Its subcellular location is the cytoplasm. Component of the cytosolic iron-sulfur (Fe/S) protein assembly (CIA) machinery. Required for maturation of extramitochondrial Fe-S proteins. The Nubp1-Nubp2 heterotetramer forms a Fe-S scaffold complex, mediating the de novo assembly of an Fe-S cluster and its transfer to target apoproteins. In Anopheles gambiae (African malaria mosquito), this protein is Cytosolic Fe-S cluster assembly factor Nubp2 homolog.